The sequence spans 540 residues: Glucose-6-phosphate isomerase (540 aa).

The active-site Proton donor is the Glu350. Catalysis depends on residues His381 and Lys503.

It belongs to the GPI family.

It is found in the cytoplasm. The catalysed reaction is alpha-D-glucose 6-phosphate = beta-D-fructose 6-phosphate. Its pathway is carbohydrate biosynthesis; gluconeogenesis. It functions in the pathway carbohydrate degradation; glycolysis; D-glyceraldehyde 3-phosphate and glycerone phosphate from D-glucose: step 2/4. Functionally, catalyzes the reversible isomerization of glucose-6-phosphate to fructose-6-phosphate. The protein is Glucose-6-phosphate isomerase of Paraburkholderia phytofirmans (strain DSM 17436 / LMG 22146 / PsJN) (Burkholderia phytofirmans).